A 308-amino-acid polypeptide reads, in one-letter code: NADH-cytochrome b5 reductase 1 (308 aa).

Residues 29 to 49 form a helical membrane-spanning segment; that stretch reads VASSPAFLVAAAAIVIAAAFY. The FAD-binding FR-type domain maps to 64 to 167; the sequence is SIWKEFPLQK…KGPKGNFKYT (104 aa). FAD is bound by residues 147 to 162 and 173 to 205; these read ASLKIGDTLRVKGPKG and HLGMIAGGTGLAPMIQIVRAILQNPPDRTNITL.

Belongs to the flavoprotein pyridine nucleotide cytochrome reductase family. In terms of assembly, monomer. Component of the 2-(3-amino-3-carboxypropyl)histidine synthase complex composed of DPH1, DPH2, DPH3 and a NADH-dependent reductase, predominantly MCR1.1. It depends on FAD as a cofactor.

Its subcellular location is the mitochondrion outer membrane. The catalysed reaction is 2 Fe(III)-[cytochrome b5] + NADH = 2 Fe(II)-[cytochrome b5] + NAD(+) + H(+). The enzyme catalyses 2 Fe(3+)-[Dph3] + NADH = 2 Fe(2+)-[Dph3] + NAD(+) + H(+). Its pathway is protein modification; peptidyl-diphthamide biosynthesis. Functionally, NADH-dependent reductase for DPH3 and cytochrome b5. Required for the first step of diphthamide biosynthesis, a post-translational modification of histidine which occurs in elongation factor 2. DPH1 and DPH2 transfer a 3-amino-3-carboxypropyl (ACP) group from S-adenosyl-L-methionine (SAM) to a histidine residue, the reaction is assisted by a reduction system comprising DPH3 and a NADH-dependent reductase, predominantly MCR1.1. By reducing DPH3, also involved in the formation of the tRNA wobble base modification mcm5s 2U (5-methoxycarbonylmethyl-2-thiouridine), mediated by the elongator complex. The cytochrome b5/NADH cytochrome b5 reductase electron transfer system supports the catalytic activity of several sterol biosynthetic enzymes. This chain is NADH-cytochrome b5 reductase 1 (MCR1.1), found in Laccaria bicolor (strain S238N-H82 / ATCC MYA-4686) (Bicoloured deceiver).